Reading from the N-terminus, the 794-residue chain is Protocadherin beta-6 (794 aa).

Positions 1–27 are cleaved as a signal peptide; it reads MMQTKVQNKKRQVAFFILLMLWGEVGS. The Extracellular segment spans residues 28–688; it reads ESIQYSVLEE…AQADSLTVYL (661 aa). Cadherin domains lie at 34–132, 137–241, 246–345, 350–449, and 454–559; these read VLEE…APEF, MLLK…VPEF, YEAQ…APEL, FISL…APAF, and YTLF…SPFV. Asn-46 carries an N-linked (GlcNAc...) asparagine glycan. A disulfide bond links Cys-95 and Cys-101. An N-linked (GlcNAc...) asparagine glycan is attached at Asn-183. Residue Asn-416 is glycosylated (N-linked (GlcNAc...) asparagine). N-linked (GlcNAc...) asparagine glycosylation occurs at Asn-565. Residues 566 to 669 enclose the Cadherin 6 domain; the sequence is GSAPCTELVP…LVDGFSQPYL (104 aa). The chain crosses the membrane as a helical span at residues 689–709; it reads VVALASVSSLFLFSVLLFVAV. Residues 710–794 lie on the Cytoplasmic side of the membrane; the sequence is RLCRRSRAAS…PTSRNSFPFS (85 aa). Positions 773–794 are disordered; sequence PPQGTEREMEETPTSRNSFPFS. A compositionally biased stretch (polar residues) spans 784-794; it reads TPTSRNSFPFS.

In terms of assembly, forms homodimers in trans (molecules expressed by two different cells). Forms promiscuous heterodimers in cis (at the plasma membrane of the same cell) with other protocadherins.

It is found in the cell membrane. Functionally, calcium-dependent cell-adhesion protein involved in cells self-recognition and non-self discrimination. Thereby, it is involved in the establishment and maintenance of specific neuronal connections in the brain. In Homo sapiens (Human), this protein is Protocadherin beta-6.